The primary structure comprises 23 residues: Dermaseptin III-like peptide (23 aa).

As to expression, expressed by the skin glands.

It localises to the secreted. Functionally, possesses a potent antimicrobial activity against bacteria, fungi and protozoa. Probably acts by disturbing membrane functions with its amphipathic structure. The polypeptide is Dermaseptin III-like peptide (Phyllomedusa burmeisteri (Brazilian common walking leaf frog)).